A 717-amino-acid polypeptide reads, in one-letter code: Fatty acid oxidation complex subunit alpha (717 aa).

The enoyl-CoA hydratase/isomerase stretch occupies residues 1 to 190 (MIHAGNAITV…KDGAVDAVVA (190 aa)). Asp298 serves as a coordination point for substrate. The tract at residues 313-717 (HPVNQAAVLG…MAANNKKFYG (405 aa)) is 3-hydroxyacyl-CoA dehydrogenase. Residues Met326, Asp345, 402–404 (VTE), Lys409, and Ser431 each bind NAD(+). Residue His452 is the For 3-hydroxyacyl-CoA dehydrogenase activity of the active site. Asn455 contributes to the NAD(+) binding site. Substrate is bound at residue Asn502.

It in the N-terminal section; belongs to the enoyl-CoA hydratase/isomerase family. In the C-terminal section; belongs to the 3-hydroxyacyl-CoA dehydrogenase family. Heterotetramer of two alpha chains (FadB) and two beta chains (FadA).

It catalyses the reaction a (3S)-3-hydroxyacyl-CoA + NAD(+) = a 3-oxoacyl-CoA + NADH + H(+). The enzyme catalyses a (3S)-3-hydroxyacyl-CoA = a (2E)-enoyl-CoA + H2O. The catalysed reaction is a 4-saturated-(3S)-3-hydroxyacyl-CoA = a (3E)-enoyl-CoA + H2O. It carries out the reaction (3S)-3-hydroxybutanoyl-CoA = (3R)-3-hydroxybutanoyl-CoA. It catalyses the reaction a (3Z)-enoyl-CoA = a 4-saturated (2E)-enoyl-CoA. The enzyme catalyses a (3E)-enoyl-CoA = a 4-saturated (2E)-enoyl-CoA. It participates in lipid metabolism; fatty acid beta-oxidation. Its function is as follows. Involved in the aerobic and anaerobic degradation of long-chain fatty acids via beta-oxidation cycle. Catalyzes the formation of 3-oxoacyl-CoA from enoyl-CoA via L-3-hydroxyacyl-CoA. It can also use D-3-hydroxyacyl-CoA and cis-3-enoyl-CoA as substrate. The sequence is that of Fatty acid oxidation complex subunit alpha from Acinetobacter baumannii (strain SDF).